Reading from the N-terminus, the 324-residue chain is Beta-ketoacyl-[acyl-carrier-protein] synthase III (324 aa).

Active-site residues include cysteine 112 and histidine 249. Residues 250–254 (QANIR) form an ACP-binding region. Asparagine 279 is an active-site residue.

Belongs to the thiolase-like superfamily. FabH family. In terms of assembly, homodimer.

The protein resides in the cytoplasm. The enzyme catalyses malonyl-[ACP] + acetyl-CoA + H(+) = 3-oxobutanoyl-[ACP] + CO2 + CoA. The protein operates within lipid metabolism; fatty acid biosynthesis. Its function is as follows. Catalyzes the condensation reaction of fatty acid synthesis by the addition to an acyl acceptor of two carbons from malonyl-ACP. Catalyzes the first condensation reaction which initiates fatty acid synthesis and may therefore play a role in governing the total rate of fatty acid production. Possesses both acetoacetyl-ACP synthase and acetyl transacylase activities. Its substrate specificity determines the biosynthesis of branched-chain and/or straight-chain of fatty acids. The chain is Beta-ketoacyl-[acyl-carrier-protein] synthase III from Streptococcus sanguinis (strain SK36).